Consider the following 217-residue polypeptide: Homeobox protein Hox-B7 (217 aa).

The Antp-type hexapeptide motif lies at 126–131 (IYPWMR). The segment at residues 137-196 (RKRGRQTYTRYQTLELEKEFHYNRYLTRRRRIEIAHTLCLTERQIKIWFQNRRMKWKKEN) is a DNA-binding region (homeobox). Residues 194 to 217 (KENKTAGPGTTGQDRAEAEEEEEE) are disordered.

It belongs to the Antp homeobox family. In terms of assembly, forms a DNA-binding heterodimer with transcription factor PBX1.

It is found in the nucleus. Its function is as follows. Sequence-specific transcription factor which is part of a developmental regulatory system that provides cells with specific positional identities on the anterior-posterior axis. This chain is Homeobox protein Hox-B7 (HOXB7), found in Homo sapiens (Human).